The following is a 215-amino-acid chain: Protein ERP2 (215 aa).

The N-terminal stretch at 1-25 (MIKSTIALPSFFIVLILALVNSVAA) is a signal peptide. Topologically, residues 26–182 (SSSYAPVAIS…TVNSTESRLT (157 aa)) are lumenal. The region spanning 41-123 (KECLYYDMVT…LKKVEITLEK (83 aa)) is the GOLD domain. The chain crosses the membrane as a helical span at residues 183-203 (WLSILIIIIIAVISIAQVLLI). Residues 204-215 (QFLFTGRQKNYV) are Cytoplasmic-facing.

This sequence belongs to the EMP24/GP25L family. As to quaternary structure, associates with EMP24, ERV25 and ERP1.

Its subcellular location is the endoplasmic reticulum membrane. Involved in vesicular protein trafficking. This is Protein ERP2 (ERP2) from Saccharomyces cerevisiae (strain ATCC 204508 / S288c) (Baker's yeast).